A 117-amino-acid polypeptide reads, in one-letter code: Photosystem II reaction center Psb28 protein (117 aa).

Belongs to the Psb28 family. In terms of assembly, part of the photosystem II complex.

The protein localises to the cellular thylakoid membrane. This chain is Photosystem II reaction center Psb28 protein, found in Prochlorococcus marinus (strain MIT 9211).